We begin with the raw amino-acid sequence, 157 residues long: Oleosin-B1 (157 aa).

The interval 2-20 (GILRKKKHERNASFKSVLT) is polar. A hydrophobic region spans residues 21 to 138 (SILATQAATF…AAPAAAPAAA (118 aa)). 3 helical membrane-spanning segments follow: residues 22-42 (ILAT…LAGT), 45-65 (AFIA…PAGI), and 72-92 (TGLA…LWLY). 9 tandem repeats follow at residues 119-122 (PRAA), 123-126 (PAAA), 127-130 (PAAA), 131-134 (PAAA), 135-138 (PAAA), 139-142 (PAPK), 143-146 (PAAA), 147-150 (PAPK), and 151-154 (PAAP). Residues 119–122 (PRAA) form a 9 X 4 AA tandem repeats of P-[AR]-[AP]-[AKP] region. The interval 137–157 (AAPAPKPAAAPAPKPAAPPAL) is disordered. A compositionally biased stretch (pro residues) spans 138 to 157 (APAPKPAAAPAPKPAAPPAL).

Belongs to the oleosin family. As to expression, the full-length protein is found in the tapetal lipid bodies of immature anthers, the proteolytically cleaved C-terminal product is found on the coats of pollen grains. Highest expression is in microspores entering and undergoing mitosis. No expression is observed in male-sterile plants, green tissues or roots.

It is found in the lipid droplet. It localises to the membrane. Many of the major pollen coat proteins are derived from endoproteolytic cleavage of oleosin-like proteins. The sequence is that of Oleosin-B1 (OlnB1) from Brassica napus (Rape).